The primary structure comprises 247 residues: DNA polymerase sliding clamp (247 aa).

The protein belongs to the PCNA family. As to quaternary structure, homotrimer. The subunits circularize to form a toroid; DNA passes through its center. Replication factor C (RFC) is required to load the toroid on the DNA.

Sliding clamp subunit that acts as a moving platform for DNA processing. Responsible for tethering the catalytic subunit of DNA polymerase and other proteins to DNA during high-speed replication. The polypeptide is DNA polymerase sliding clamp (Methanosphaerula palustris (strain ATCC BAA-1556 / DSM 19958 / E1-9c)).